The chain runs to 213 residues: Adenylate kinase (213 aa).

10-15 (GSGKGT) lines the ATP pocket. An NMP region spans residues 30–59 (SVGDLLRNIISSESKLGKGIKDTVESGNLI). AMP contacts are provided by residues R36, 57–59 (NLI), 83–86 (GFPR), and Q90. Residues 125-160 (DRLTCLDCKSIYSISSFKNTTCAKCKSTRLEKRIDD) form an LID region. R126 contacts ATP. 2 residues coordinate Zn(2+): C129 and C132. Position 135 to 136 (135 to 136 (IY)) interacts with ATP. Positions 146 and 149 each coordinate Zn(2+). Residues R157 and R169 each contribute to the AMP site. ATP is bound at residue L195.

It belongs to the adenylate kinase family. In terms of assembly, monomer.

It is found in the cytoplasm. The enzyme catalyses AMP + ATP = 2 ADP. Its pathway is purine metabolism; AMP biosynthesis via salvage pathway; AMP from ADP: step 1/1. Its function is as follows. Catalyzes the reversible transfer of the terminal phosphate group between ATP and AMP. Plays an important role in cellular energy homeostasis and in adenine nucleotide metabolism. The polypeptide is Adenylate kinase (Wolbachia pipientis subsp. Culex pipiens (strain wPip)).